Here is a 364-residue protein sequence, read N- to C-terminus: MYIKNVHLINFRNYDDMYLELSPNTNIFVGNNAQGKTNILESIYYSSIGKSHRTNKDKDLIKWDKNNTYLRTYVSRERLDKTIDINIFKNGKKAITVNKIKIKKISELMGNLNVVMFSPEDLRIIKDSPGNRRKFLDIELCKINNVYYHDLVQYNKILSERNTALKNWNNKINDIIDIYDEQLSKYGAFIIKERNKYLDKLNIIGKNIHKKITNDLEDINFRYLTNIKDFDNAEKELLMFFKKNRKKDFERNSTSIGPHRDDFEVSINNIDTRIFGSQGQQRTAVLTLKFASLEIIKNIIGEYPVLLLDDVLSELDSNRQKFVLNSIDKIQTIITCTGIEEIDKYLDKKQSQLYLVNNGKIKRV.

ATP is bound at residue 30-37 (GNNAQGKT).

The protein belongs to the RecF family.

The protein resides in the cytoplasm. The RecF protein is involved in DNA metabolism; it is required for DNA replication and normal SOS inducibility. RecF binds preferentially to single-stranded, linear DNA. It also seems to bind ATP. This chain is DNA replication and repair protein RecF, found in Clostridium botulinum (strain 657 / Type Ba4).